The following is a 32-amino-acid chain: MESIAYVLIFACLIGLFFFAIFFREPPRITKK.

Residues 3-23 form a helical membrane-spanning segment; it reads SIAYVLIFACLIGLFFFAIFF.

It belongs to the PsbT family. PSII is composed of 1 copy each of membrane proteins PsbA, PsbB, PsbC, PsbD, PsbE, PsbF, PsbH, PsbI, PsbJ, PsbK, PsbL, PsbM, PsbT, PsbX, PsbY, PsbZ, Psb30/Ycf12, peripheral proteins PsbO, CyanoQ (PsbQ), PsbU, PsbV and a large number of cofactors. It forms dimeric complexes.

The protein localises to the cellular thylakoid membrane. Found at the monomer-monomer interface of the photosystem II (PS II) dimer, plays a role in assembly and dimerization of PSII. PSII is a light-driven water plastoquinone oxidoreductase, using light energy to abstract electrons from H(2)O, generating a proton gradient subsequently used for ATP formation. This chain is Photosystem II reaction center protein T, found in Cyanothece sp. (strain PCC 7425 / ATCC 29141).